We begin with the raw amino-acid sequence, 813 residues long: Fibroblast growth factor receptor 2 (813 aa).

Residues 1-14 form the signal peptide; sequence MLLLALLAFLLVSR. Residues 18–367 lie on the Extracellular side of the membrane; sequence RPSYSMVDDT…EDNPVPYYME (350 aa). In terms of domain architecture, Ig-like C2-type 1 spans 21-117; sequence YSMVDDTTPE…NSHFFHVNVT (97 aa). A disulfide bridge connects residues Cys58 and Cys103. Asn79 and Asn115 each carry an N-linked (GlcNAc...) asparagine glycan. The interval 119 to 143 is disordered; the sequence is ASSSGDDEDDNDGSEDFTNDNNNIR. Over residues 123–136 the composition is skewed to acidic residues; sequence GDDEDDNDGSEDFT. Ig-like C2-type domains are found at residues 145 to 237 and 246 to 348; these read PYWT…YHLD and PILQ…AWLT. The tract at residues 152-169 is heparin-binding; the sequence is KMEKKLHAVSAANTVKLR. Cys170 and Cys221 are oxidised to a cystine. N-linked (GlcNAc...) asparagine glycosylation is found at Asn231, Asn255, Asn287, Asn308, and Asn321. Residues Cys268 and Cys332 are joined by a disulfide bond. The helical transmembrane segment at 368-388 threads the bilayer; it reads IGIYSTGIFIIFCMVVVCVVC. Over 389–813 the chain is Cytoplasmic; sequence RMRQGAKKKK…FQHVNGVVKT (425 aa). Position 456 is a phosphotyrosine; by autocatalysis (Tyr456). In terms of domain architecture, Protein kinase spans 471-760; the sequence is LTLGKPLGEG…LTLTTNEEYL (290 aa). Residues 477 to 485, Lys507, 555 to 557, and Asn561 contribute to the ATP site; these read LGEGCFGQV and EYA. Tyr576 carries the phosphotyrosine; by autocatalysis modification. Asp616 acts as the Proton acceptor in catalysis. Phosphotyrosine; by autocatalysis occurs at positions 646, 647, and 759. Positions 771–792 are enriched in low complexity; the sequence is PSFPDSSCSASSSSGDDSVFSP. The segment at 771-801 is disordered; it reads PSFPDSSCSASSSSGDDSVFSPDPMPHDPCL.

It belongs to the protein kinase superfamily. Tyr protein kinase family. Fibroblast growth factor receptor subfamily. In terms of assembly, monomer. Homodimer after ligand binding. Autophosphorylated. Binding of FGF family members together with heparan sulfate proteoglycan or heparin promotes receptor dimerization and autophosphorylation on tyrosine residues. Autophosphorylation occurs in trans between the two FGFR molecules present in the dimer. In terms of processing, N-glycosylated in the endoplasmic reticulum. The N-glycan chains undergo further maturation to an Endo H-resistant form in the Golgi apparatus. Post-translationally, ubiquitinated. FGFR2 is rapidly ubiquitinated after autophosphorylation, leading to internalization and degradation. Subject to degradation both in lysosomes and by the proteasome. Expressed in the anterior neural plate in early neurula stage embryos. Later in development, the protein is also expressed in the eye anlagen, midbrain-hindbrain boundary and otic vesicle.

It is found in the cell membrane. It localises to the golgi apparatus. Its subcellular location is the cytoplasmic vesicle. The catalysed reaction is L-tyrosyl-[protein] + ATP = O-phospho-L-tyrosyl-[protein] + ADP + H(+). With respect to regulation, present in an inactive conformation in the absence of bound ligand. Ligand binding leads to dimerization and activation by autophosphorylation on tyrosine residues. Tyrosine-protein kinase that acts as a cell-surface receptor for fibroblast growth factors and plays an essential role in the regulation of cell proliferation, differentiation, migration and apoptosis, and in the regulation of embryonic development. Required for normal embryonic patterning, limb bud development, lung morphogenesis, osteogenesis and skin development. Plays an essential role in the regulation of osteoblast differentiation, proliferation and apoptosis, and is required for normal skeleton development. Promotes cell proliferation in keratinocytes and immature osteoblasts, but promotes apoptosis in differentiated osteoblasts. Phosphorylates PLCG1, FRS2 and PAK4. Ligand binding leads to the activation of several signaling cascades. Activation of PLCG1 leads to the production of the cellular signaling molecules diacylglycerol and inositol 1,4,5-trisphosphate. Phosphorylation of FRS2 triggers recruitment of GRB2, GAB1, PIK3R1 and SOS1, and mediates activation of RAS, MAPK1/ERK2, MAPK3/ERK1 and the MAP kinase signaling pathway, as well as of the AKT1 signaling pathway. FGFR2 signaling is down-regulated by ubiquitination, internalization and degradation. Mutations that lead to constitutive kinase activation or impair normal FGFR2 maturation, internalization and degradation lead to aberrant signaling. Over-expressed FGFR2 promotes activation of STAT1. In Xenopus laevis (African clawed frog), this protein is Fibroblast growth factor receptor 2 (fgfr2).